A 706-amino-acid chain; its full sequence is Semenogelin-2 (706 aa).

Positions 1 to 23 (MKSIILFVLSLLLILEKQAAVMG) are cleaved as a signal peptide. Disordered regions lie at residues 25–62 (KGGS…SKGS), 131–156 (KGGQ…KGIF), and 276–678 (NLNQ…SGAH). Residues 50–59 (GQKDKQHTES) are compositionally biased toward basic and acidic residues. A compositionally biased stretch (polar residues) spans 137–151 (HGTQNPSQDQGNSPS). The span at 297 to 308 (TEERQPNHEENS) shows a compositional bias: basic and acidic residues. Positions 329-339 (KSQNQVTIPSQ) are enriched in polar residues. Positions 340-349 (DQEHGHKENK) are enriched in basic and acidic residues. The segment covering 389–399 (KSQNQVTIPSQ) has biased composition (polar residues). Residues 400-409 (DQEHGHKENK) are compositionally biased toward basic and acidic residues. Positions 449-459 (KSQNQVTIPSQ) are enriched in polar residues. A compositionally biased stretch (basic and acidic residues) spans 460-469 (DQEHGHKENK). The span at 509–519 (KSQNQVAIPSQ) shows a compositional bias: polar residues. Over residues 520–529 (DQEHGHKENK) the composition is skewed to basic and acidic residues. The segment covering 569–579 (KSQNQVTIPSQ) has biased composition (polar residues). Residues 580–589 (DQEHGHKENK) show a composition bias toward basic and acidic residues. Composition is skewed to polar residues over residues 611–622 (KDVSQSSLSFQT) and 630–653 (SQIQ…NSGK). Positions 654 to 670 (SADREQDLLSHEQEGRY) are enriched in basic and acidic residues.

The protein belongs to the semenogelin family. As to quaternary structure, interacts with SERPINA5.

The protein resides in the secreted. Participates in the formation of a gel matrix (sperm coagulum) entrapping the accessory gland secretions and ejaculated spermatozoa. This Macaca mulatta (Rhesus macaque) protein is Semenogelin-2 (SEMG2).